A 159-amino-acid polypeptide reads, in one-letter code: MNRVLYPGTFDPITKGHGDLIERASRLFDHVIIAVAASPKKNPLFSLEQRVALAQEVTKHLPNVEVVGFSTLLAHFVKEQKANVFLRGLRAVSDFEYEFQLANMNRQLAPDVESMFLTPSEKYSFISSTLVREIAALGGDISKFVHPAVADALAERFKR.

Thr9 serves as a coordination point for substrate. Residues 9 to 10 (TF) and His17 contribute to the ATP site. Positions 41, 73, and 87 each coordinate substrate. ATP is bound by residues 88–90 (GLR), Glu98, and 123–129 (YSFISST).

Belongs to the bacterial CoaD family. In terms of assembly, homohexamer. The cofactor is Mg(2+).

It is found in the cytoplasm. It carries out the reaction (R)-4'-phosphopantetheine + ATP + H(+) = 3'-dephospho-CoA + diphosphate. It participates in cofactor biosynthesis; coenzyme A biosynthesis; CoA from (R)-pantothenate: step 4/5. Reversibly transfers an adenylyl group from ATP to 4'-phosphopantetheine, yielding dephospho-CoA (dPCoA) and pyrophosphate. This is Phosphopantetheine adenylyltransferase from Pseudomonas aeruginosa (strain LESB58).